Consider the following 255-residue polypeptide: Zinc D-Ala-D-Ala carboxypeptidase (255 aa).

The signal sequence occupies residues 1–42; the sequence is MRPRPIRLLLTALVGAGLAFAPVSAVAAPTATASASADVGAL. D43 carries the blocked amino end (Asp) modification. Disulfide bonds link C45–C123 and C136–C184. A substrate-binding site is contributed by R180. H196 is a binding site for Zn(2+). An intrachain disulfide couples C212 to C253. H234 functions as the Proton donor in the catalytic mechanism. 2 residues coordinate Zn(2+): H237 and H239.

It belongs to the peptidase M15 family. Zn(2+) is required as a cofactor. The N-terminus is partially blocked as a result of the cyclization of the first two amino acids into anhydroaspartylglycine imide.

It is found in the secreted. It catalyses the reaction Cleavage of the bond: (Ac)2-L-lysyl-D-alanyl-|-D-alanine.. Functionally, this enzyme catalyzes carboxypeptidation and transpeptidation reactions involved in bacterial cell wall metabolism. It effectively catalyzes the transfer of the N-alpha, N-epsilon-diacetyl-L-lysyl-D-alanyl electrophilic group of the standard tripeptide substrate N-alpha,N-epsilon-diacetyl-L-lysyl-D-alanyl-D-alanine to water. It also performs a weak beta-lactamase activity, hydrolyzing penicillin into penicilloate at a very low rate. The polypeptide is Zinc D-Ala-D-Ala carboxypeptidase (Streptomyces albus G).